The sequence spans 75 residues: Vacuolar ATPase assembly integral membrane protein VMA21 (75 aa).

Topologically, residues 1 to 8 (MPVDVAPG) are cytoplasmic. The helical transmembrane segment at 9–29 (VIKKLMFFTAAMVICPLLTFF) threads the bilayer. Over 30 to 41 (SIKQFTTNTIVS) the chain is Lumenal. The chain crosses the membrane as a helical span at residues 42–62 (GGLAALAANLVLIGYIVVAFM). The Cytoplasmic portion of the chain corresponds to 63 to 75 (EDTTDVKAESKKD).

Belongs to the VMA21 family.

It localises to the endoplasmic reticulum membrane. The protein localises to the endoplasmic reticulum-Golgi intermediate compartment membrane. The protein resides in the cytoplasmic vesicle. It is found in the COPII-coated vesicle membrane. Required for the assembly of the V0 complex of the vacuolar ATPase (V-ATPase) in the endoplasmic reticulum. The chain is Vacuolar ATPase assembly integral membrane protein VMA21 from Vanderwaltozyma polyspora (strain ATCC 22028 / DSM 70294 / BCRC 21397 / CBS 2163 / NBRC 10782 / NRRL Y-8283 / UCD 57-17) (Kluyveromyces polysporus).